Consider the following 507-residue polypeptide: (6-4) photolyase (507 aa).

6,7-dimethyl-8-(1-D-ribityl)lumazine contacts are provided by residues 9–10, 32–40, and Gly105; these read GD and CEVMAEASY. Residues 265–269 and Asn273 each bind FAD; that span reads HSLLS. Cys350 contributes to the [4Fe-4S] cluster binding site. FAD is bound by residues 363-366, Asp397, and Asn406; that span reads YAHH. [4Fe-4S] cluster is bound by residues Cys438, Cys441, and Cys454.

It belongs to the iron-sulfur bacterial cryptochrome/photolyase (FeS-BCP) family. The cofactor is FAD. 6,7-dimethyl-8-(1-D-ribityl)lumazine is required as a cofactor. [4Fe-4S] cluster serves as cofactor.

It carries out the reaction (6-4) photoproduct (in DNA) = 2 pyrimidine residues (in DNA).. Photolyase involved in the repair of UV-induced (6-4) lesions in DNA. Catalyzes the photoreactivation of (6-4) pyrimidine-pyrimidone photoproducts by using blue-light energy. Can repair (6-4) photoproducts in ssDNA as well as in dsDNA. This chain is (6-4) photolyase, found in Agrobacterium fabrum (strain C58 / ATCC 33970) (Agrobacterium tumefaciens (strain C58)).